We begin with the raw amino-acid sequence, 260 residues long: Global transcriptional regulator CodY (260 aa).

Residues 1–159 (MPNLLEKTRK…SSTVVGIQLL (159 aa)) form a GAF domain region. Residues 207–226 (ASVIADRIGITRSVIVNALR) constitute a DNA-binding region (H-T-H motif).

This sequence belongs to the CodY family.

The protein resides in the cytoplasm. DNA-binding global transcriptional regulator which is involved in the adaptive response to starvation and acts by directly or indirectly controlling the expression of numerous genes in response to nutrient availability. During rapid exponential growth, CodY is highly active and represses genes whose products allow adaptation to nutrient depletion. In Streptococcus pyogenes serotype M4 (strain MGAS10750), this protein is Global transcriptional regulator CodY.